The following is a 209-amino-acid chain: Claudin-4 (209 aa).

Topologically, residues 1–9 (MASMGLQVM) are cytoplasmic. Residues 1-103 (MASMGLQVMG…GVLLSVVGGK (103 aa)) are interaction with EPHA2. A helical membrane pass occupies residues 10 to 30 (GIALAVLGWLGAILSCALPMW). Residues 31 to 81 (RVTAFIGSNIVTSQTIWEGLWMNCVVQSTGQMQCKVYDSLLALPQDLQAAR) are Extracellular-facing. Cysteine 54 and cysteine 64 are disulfide-bonded. The helical transmembrane segment at 82-102 (ALIVICIILAVFGVLLSVVGG) threads the bilayer. The Cytoplasmic portion of the chain corresponds to 103 to 117 (KCTNCVDDESSKAKI). The chain crosses the membrane as a helical span at residues 118-138 (MIVAGVVFLLAGLLVMVPVSW). The Extracellular portion of the chain corresponds to 139–160 (TANNVIRDFYNPLVASGQKREM). The chain crosses the membrane as a helical span at residues 161 to 181 (GASLYVGWAAAGLLILGGALL). Topologically, residues 182–209 (CFNCPPRNDKPYSAKYSAARSAPASNYV) are cytoplasmic. The residue at position 208 (tyrosine 208) is a Phosphotyrosine; by EPHA2. The tract at residues 208 to 209 (YV) is interactions with TJP1, TJP2 and TJP3.

The protein belongs to the claudin family. As to quaternary structure, interacts with EPHA2; phosphorylates CLDN4 and may regulate tight junctions. Directly interacts with TJP1/ZO-1, TJP2/ZO-2 and TJP3/ZO-3. Interacts with CLDN1. Interacts with CLDN8. Phosphorylated. Phosphorylation by EPHA2 is stimulated by EFNA1 and alters interaction with TJP1.

The protein resides in the cell junction. It is found in the tight junction. Its subcellular location is the cell membrane. Channel-forming tight junction protein that mediates paracellular chloride transport in the kidney. Plays a critical role in the paracellular reabsorption of filtered chloride in the kidney collecting ducts. Claudins play a major role in tight junction-specific obliteration of the intercellular space, through calcium-independent cell-adhesion activity. This is Claudin-4 (CLDN4) from Bos taurus (Bovine).